A 502-amino-acid chain; its full sequence is Zinc finger C3HC-type protein 1 (502 aa).

An N-acetylalanine modification is found at alanine 2. Phosphoserine is present on serine 24. A Phosphothreonine modification is found at threonine 28. Residues 35–74 form a disordered region; sequence LIDEGIAPEEGGVDAQDTSATSQSVNGSPQAEQPSLESTS. Residues 50-72 are compositionally biased toward polar residues; sequence QDTSATSQSVNGSPQAEQPSLES. 2 positions are modified to phosphoserine: serine 58 and serine 62. Threonine 84 is modified (phosphothreonine). A C3HC-type zinc finger spans residues 102–156; it reads CAKYGWVTVECDMLKCSSCQAFLCASLQPAFDFDRYKQRCAELKKALCTAHEKFC. The interval 302-423 is disordered; sequence SSPIPGLEGR…SSRSFFDPTS (122 aa). Phosphoserine occurs at positions 321 and 329. The residue at position 333 (threonine 333) is a Phosphothreonine. Phosphoserine is present on residues serine 338, serine 344, serine 354, serine 359, and serine 370. A compositionally biased stretch (polar residues) spans 351–360; sequence RTRSWDSSSP. Residues 371 to 380 show a composition bias toward low complexity; it reads PTTRTRPVTR. Serine 381 bears the Phosphoserine mark. At threonine 384 the chain carries Phosphothreonine. Serine 395 carries the phosphoserine modification. The Nuclear localization signal motif lies at 396–402; the sequence is PLRKAKR. Phosphoserine occurs at positions 407 and 483. A compositionally biased stretch (low complexity) spans 407-422; sequence SSSSSDTSSRSFFDPT.

As to quaternary structure, interacts with TPR; this interaction mediates ZC3HC1 nuclear envelopes (NE)-association but also required for proper positioning of a substantial amount of TPR at the nuclear basket (NB). Phosphorylated. May also be weakly phosphorylated on Tyr residues.

The protein localises to the nucleus. It localises to the nucleus envelope. Functionally, required for proper positioning of a substantial amount of TPR at the nuclear basket (NB) through interaction with TPR. This chain is Zinc finger C3HC-type protein 1 (ZC3HC1), found in Pongo abelii (Sumatran orangutan).